Here is a 1021-residue protein sequence, read N- to C-terminus: DNA-directed RNA polymerase 2B, chloroplastic/mitochondrial (1021 aa).

The disordered stretch occupies residues 315-337; the sequence is KKQKAEKDKQKEDGEHVTQEQEK. Active-site residues include Asp722, Lys797, and Asp954.

This sequence belongs to the phage and mitochondrial RNA polymerase family.

The protein localises to the plastid. It is found in the chloroplast. The protein resides in the mitochondrion. The catalysed reaction is RNA(n) + a ribonucleoside 5'-triphosphate = RNA(n+1) + diphosphate. Functionally, DNA-dependent RNA polymerase catalyzes the transcription of DNA into RNA using the four ribonucleoside triphosphates as substrates. The polypeptide is DNA-directed RNA polymerase 2B, chloroplastic/mitochondrial (RPOT2-TOM) (Nicotiana tabacum (Common tobacco)).